Consider the following 1496-residue polypeptide: Rap guanine nucleotide exchange factor 2 (1496 aa).

Disordered stretches follow at residues 40–59 (HVSS…SSSL) and 68–101 (SEAG…SDPL). Positions 83–94 (VDSEDDDDEEDI) are enriched in acidic residues. 135–254 (AFANMTMSVR…VEEEGEIVMV (120 aa)) contacts a nucleoside 3',5'-cyclic phosphate. The N-terminal Ras-GEF domain occupies 267–380 (KGHIVIKGTS…RLLNIACAAK (114 aa)). Residues 385 to 470 (LMTLTKPSRE…ITVKTNLFVF (86 aa)) enclose the PDZ domain. Phosphoserine is present on Ser501. The 87-residue stretch at 606–692 (PDQVLRVFKA…GRYYLKNNME (87 aa)) folds into the Ras-associating domain. Thr644 carries the post-translational modification Phosphothreonine; by PLK2. The 228-residue stretch at 717–944 (STVEVATQLS…SQGSANATVL (228 aa)) folds into the Ras-GEF domain. Residue Ser806 is modified to Phosphoserine; by PLK2. Ser930 bears the Phosphoserine mark. A phosphoserine; by PLK2 mark is found at Ser933 and Ser1022. The segment at 1002-1051 (PATSTLPKNPGDKKPVKSETSPVAPRAGPQQKVQPQQPLAQPQPPHKVSQ) is disordered. Over residues 1030–1041 (PQQKVQPQQPLA) the composition is skewed to low complexity. A phosphoserine mark is found at Ser1079, Ser1088, Ser1094, Ser1115, Ser1119, and Ser1158. Residues 1093 to 1159 (GSLERHRKQA…RSSIVSNSSF (67 aa)) are disordered. Low complexity-rich tracts occupy residues 1110 to 1124 (SSQL…QSSP) and 1140 to 1159 (SDSG…NSSF). Position 1175 is a phosphoserine; by PLK2 (Ser1175). Disordered regions lie at residues 1224-1256 (STEE…SGSH), 1303-1369 (STKY…EEAK), and 1390-1496 (RKEG…VSAV). Positions 1227–1237 (ELSHDQGDRAS) are enriched in basic and acidic residues. 2 stretches are compositionally biased toward polar residues: residues 1246–1256 (GSWTSCSSGSH) and 1306–1330 (YNRQ…SSTG). Over residues 1440-1455 (PTEAPAPGQTPPAAAA) the composition is skewed to low complexity. A compositionally biased stretch (acidic residues) spans 1485–1496 (AEEDEDEQVSAV).

Belongs to the RAPGEF2 family. Found in a complex, at least composed of KIDINS220, MAGI2, NTRK1 and RAPGEF2; the complex is mainly formed at late endosomes in a neuronal growth factor (NGF)-dependent manner. Interacts (via C-terminal domain) with NEDD4 (via WW domains); this interaction leads to ubiquitination and degradation via the proteasome pathway in a cAMP-independent manner. Interacts with MAGI1 (via PDZ domain). Interacts with ADRB1 (via C-terminal PDZ motif); the interaction is direct. Interacts (via Ras-associating domain) with RAP1A (via GTP-bound active form). Interacts weakly with HRAS (via GDP- and GTP-bound forms). Interacts (via C-terminal domain) with MAGI2 (via PDZ and WW domains). Interacts with CDH1, CTNNB1 and TJP1. Ubiquitinated by NEDD4, leading to proteasomal degradation. In terms of processing, phosphorylation by PLK2 promotes its activity. In terms of tissue distribution, expressed in all layers of the cerebral cortex, hippocampus and cerebellum. Expressed in the cortical plate, cingulate cortex and the subventricular zone. Expressed in neurons and endocrine cells (at protein level). Expressed in melanoma cells.

It is found in the cytoplasm. The protein resides in the perinuclear region. The protein localises to the cell membrane. Its subcellular location is the late endosome. It localises to the cell junction. Functions as a guanine nucleotide exchange factor (GEF), which activates Rap and Ras family of small GTPases by exchanging bound GDP for free GTP in a cAMP-dependent manner. Serves as a link between cell surface receptors and Rap/Ras GTPases in intracellular signaling cascades. Also acts as an effector for Rap1 by direct association with Rap1-GTP thereby leading to the amplification of Rap1-mediated signaling. Shows weak activity on HRAS. It is controversial whether RAPGEF2 binds cAMP and cGMP or not. Its binding to ligand-activated beta-1 adrenergic receptor ADRB1 leads to the Ras activation through the G(s)-alpha signaling pathway. Involved in the cAMP-induced Ras and Erk1/2 signaling pathway that leads to sustained inhibition of long term melanogenesis by reducing dendrite extension and melanin synthesis. Also provides inhibitory signals for cell proliferation of melanoma cells and promotes their apoptosis in a cAMP-independent nanner. Regulates cAMP-induced neuritogenesis by mediating the Rap1/B-Raf/ERK signaling through a pathway that is independent on both PKA and RAPGEF3/RAPGEF4. Involved in neuron migration and in the formation of the major forebrain fiber connections forming the corpus callosum, the anterior commissure and the hippocampal commissure during brain development. Involved in neuronal growth factor (NGF)-induced sustained activation of Rap1 at late endosomes and in brain-derived neurotrophic factor (BDNF)-induced axon outgrowth of hippocampal neurons. Plays a role in the regulation of embryonic blood vessel formation and in the establishment of basal junction integrity and endothelial barrier function. May be involved in the regulation of the vascular endothelial growth factor receptor KDR and cadherin CDH5 expression at allantois endothelial cell-cell junctions. This Mus musculus (Mouse) protein is Rap guanine nucleotide exchange factor 2 (Rapgef2).